Here is a 503-residue protein sequence, read N- to C-terminus: Maturase K (503 aa).

It belongs to the intron maturase 2 family. MatK subfamily.

Its subcellular location is the plastid. The protein resides in the chloroplast. Usually encoded in the trnK tRNA gene intron. Probably assists in splicing its own and other chloroplast group II introns. In Rosa gigantea (Giant tea rose), this protein is Maturase K.